The following is a 256-amino-acid chain: Pimeloyl-[acyl-carrier protein] methyl ester esterase (256 aa).

The 228-residue stretch at H15–P242 folds into the AB hydrolase-1 domain. Residues W22, S82 to L83, and F143 to Q147 each bind substrate. The Nucleophile role is filled by S82. Catalysis depends on residues D207 and H235. H235 is a binding site for substrate.

The protein belongs to the AB hydrolase superfamily. Carboxylesterase BioH family. Monomer.

Its subcellular location is the cytoplasm. It catalyses the reaction 6-carboxyhexanoyl-[ACP] methyl ester + H2O = 6-carboxyhexanoyl-[ACP] + methanol + H(+). The protein operates within cofactor biosynthesis; biotin biosynthesis. The physiological role of BioH is to remove the methyl group introduced by BioC when the pimeloyl moiety is complete. It allows to synthesize pimeloyl-ACP via the fatty acid synthetic pathway through the hydrolysis of the ester bonds of pimeloyl-ACP esters. This is Pimeloyl-[acyl-carrier protein] methyl ester esterase from Escherichia fergusonii (strain ATCC 35469 / DSM 13698 / CCUG 18766 / IAM 14443 / JCM 21226 / LMG 7866 / NBRC 102419 / NCTC 12128 / CDC 0568-73).